Here is a 199-residue protein sequence, read N- to C-terminus: Holliday junction branch migration complex subunit RuvA (199 aa).

Positions 1 to 64 are domain I; sequence MIAFLKGAVF…ENEFKLFGFL (64 aa). Positions 65–143 are domain II; it reads DQDELRLFKT…ELKLVEVEKE (79 aa). Residues 144–148 form a flexible linker region; it reads QRPLL. The interval 148–199 is domain III; sequence LDELMEALEILGYSRSEVLPAIMDLNRNKQLGNIVEENIKLVLKAKAQEMRR.

The protein belongs to the RuvA family. Homotetramer. Forms an RuvA(8)-RuvB(12)-Holliday junction (HJ) complex. HJ DNA is sandwiched between 2 RuvA tetramers; dsDNA enters through RuvA and exits via RuvB. An RuvB hexamer assembles on each DNA strand where it exits the tetramer. Each RuvB hexamer is contacted by two RuvA subunits (via domain III) on 2 adjacent RuvB subunits; this complex drives branch migration. In the full resolvosome a probable DNA-RuvA(4)-RuvB(12)-RuvC(2) complex forms which resolves the HJ.

The protein localises to the cytoplasm. The RuvA-RuvB-RuvC complex processes Holliday junction (HJ) DNA during genetic recombination and DNA repair, while the RuvA-RuvB complex plays an important role in the rescue of blocked DNA replication forks via replication fork reversal (RFR). RuvA specifically binds to HJ cruciform DNA, conferring on it an open structure. The RuvB hexamer acts as an ATP-dependent pump, pulling dsDNA into and through the RuvAB complex. HJ branch migration allows RuvC to scan DNA until it finds its consensus sequence, where it cleaves and resolves the cruciform DNA. In Syntrophomonas wolfei subsp. wolfei (strain DSM 2245B / Goettingen), this protein is Holliday junction branch migration complex subunit RuvA.